Here is a 182-residue protein sequence, read N- to C-terminus: Large ribosomal subunit protein uL10 (182 aa).

Belongs to the universal ribosomal protein uL10 family. As to quaternary structure, part of the ribosomal stalk of the 50S ribosomal subunit. The N-terminus interacts with L11 and the large rRNA to form the base of the stalk. The C-terminus forms an elongated spine to which L12 dimers bind in a sequential fashion forming a multimeric L10(L12)X complex.

Functionally, forms part of the ribosomal stalk, playing a central role in the interaction of the ribosome with GTP-bound translation factors. This chain is Large ribosomal subunit protein uL10, found in Janthinobacterium sp. (strain Marseille) (Minibacterium massiliensis).